Reading from the N-terminus, the 87-residue chain is uncharacterized protein (87 aa).

The chain crosses the membrane as a helical span at residues 42-62; it reads LADALYSAGSAAFTIAASLVA.

The protein belongs to the SPP1 holin family.

Its subcellular location is the membrane. This is an uncharacterized protein from Bacillus licheniformis.